The primary structure comprises 263 residues: Coiled-coil domain-containing protein 172 (263 aa).

Residues 13–191 (TEHQAEESRR…LKVLKDEETE (179 aa)) are a coiled coil.

Belongs to the CCDC172 family. In terms of assembly, may interact with TEKT2. Detected in spermatozoa (at protein level). Predominantly expressed in testis and in spermatozoa from the caput and corpus epididymis.

The protein resides in the cytoplasm. It is found in the cell projection. Its subcellular location is the cilium. The sequence is that of Coiled-coil domain-containing protein 172 (Ccdc172) from Rattus norvegicus (Rat).